Reading from the N-terminus, the 427-residue chain is Glutamate-1-semialdehyde 2,1-aminomutase (427 aa).

The residue at position 268 (Lys-268) is an N6-(pyridoxal phosphate)lysine.

Belongs to the class-III pyridoxal-phosphate-dependent aminotransferase family. HemL subfamily. It depends on pyridoxal 5'-phosphate as a cofactor.

It is found in the cytoplasm. The enzyme catalyses (S)-4-amino-5-oxopentanoate = 5-aminolevulinate. The protein operates within porphyrin-containing compound metabolism; protoporphyrin-IX biosynthesis; 5-aminolevulinate from L-glutamyl-tRNA(Glu): step 2/2. This is Glutamate-1-semialdehyde 2,1-aminomutase from Methanococcus maripaludis (strain C6 / ATCC BAA-1332).